The following is a 184-amino-acid chain: Ras protein let-60 (184 aa).

GTP is bound at residue 10 to 17 (GDGGVGKS). Positions 32-40 (YDPTIEDSY) match the Effector region motif. GTP is bound by residues 57-61 (DTAGQ) and 116-119 (NKCD). Cys181 carries the post-translational modification Cysteine methyl ester. A lipid anchor (S-farnesyl cysteine) is attached at Cys181. Positions 182–184 (QIM) are cleaved as a propeptide — removed in mature form.

The protein belongs to the small GTPase superfamily. Ras family. In terms of assembly, interacts with soc-2. Interacts (in GTP-bound form) with plc-1 (via Ras-associating domain 1). As to expression, expressed in body wall muscles and in the nervous system including ganglion, nerve ring dorsal and ventral nerve cords, motor neurons and sensory tail neurons.

It localises to the cell membrane. It catalyses the reaction GTP + H2O = GDP + phosphate + H(+). Its function is as follows. GTP-binding protein with GTPase activity. The level of let-60 controls the switch between vulval and hypodermal cell fates during C.elegans vulval induction. May stimulate the guanine nucleotide exchange factor (GEF) activity of rap-1. May induce nuclear condensation. This chain is Ras protein let-60, found in Caenorhabditis elegans.